The chain runs to 815 residues: Cell division control protein 48 homolog D (815 aa).

Ala2 bears the N-acetylalanine mark. The residue at position 42 (Ser42) is a Phosphoserine. ATP is bound by residues 249–256 (GPPGSGKT) and 522–529 (GPPGCGKT). Ser720 bears the Phosphoserine mark. Residues 772 to 815 (GSEFRFPDAPTGTTGAFPGAAATVGGVDPFATSGGAADDDDLYS) form a disordered region. Positions 780-798 (APTGTTGAFPGAAATVGGV) are enriched in low complexity.

It belongs to the AAA ATPase family.

It is found in the nucleus. The protein localises to the cytoplasm. It localises to the cytoskeleton. Its subcellular location is the phragmoplast. Functionally, probably functions in cell division and growth processes. Interacts with certain SNAREs as part of specialized membrane fusion events where vesicles from the same organelle fuse (homotypic fusion). The sequence is that of Cell division control protein 48 homolog D (CDC48D) from Arabidopsis thaliana (Mouse-ear cress).